A 125-amino-acid chain; its full sequence is Glycine cleavage system H protein 1 (125 aa).

Residues lysine 22–arginine 103 form the Lipoyl-binding domain. An N6-lipoyllysine modification is found at lysine 63.

The protein belongs to the GcvH family. In terms of assembly, the glycine cleavage system is composed of four proteins: P, T, L and H. Requires (R)-lipoate as cofactor.

In terms of biological role, the glycine cleavage system catalyzes the degradation of glycine. The H protein shuttles the methylamine group of glycine from the P protein to the T protein. The protein is Glycine cleavage system H protein 1 of Caldanaerobacter subterraneus subsp. tengcongensis (strain DSM 15242 / JCM 11007 / NBRC 100824 / MB4) (Thermoanaerobacter tengcongensis).